The sequence spans 248 residues: Probable transcriptional regulatory protein Psyr_1407 (248 aa).

The protein belongs to the TACO1 family.

It is found in the cytoplasm. This chain is Probable transcriptional regulatory protein Psyr_1407, found in Pseudomonas syringae pv. syringae (strain B728a).